A 330-amino-acid polypeptide reads, in one-letter code: Catharanthine synthase (330 aa).

The short motif at 81–83 (HGA) is the Involved in the stabilization of the negatively charged intermediate by the formation of the oxyanion hole element. A catharanthine-binding site is contributed by Gly84. Catalysis depends on Ser173, which acts as the Proton acceptor. The active site involves Asp274. Catharanthine is bound at residue Tyr305. Tyr305 acts as the Proton donor/acceptor in catalysis.

The protein belongs to the 'GDXG' lipolytic enzyme family. Interacts with dehydroprecondylocarpine acetate synthase (DPAS). As to expression, expressed in leaf epidermis.

The protein resides in the cytoplasm. It localises to the cytosol. It is found in the nucleus. It catalyses the reaction dehydrosecodine = catharanthine. It functions in the pathway alkaloid biosynthesis. Functionally, component of iboga and aspidosperma monoterpenoid indole alkaloids (MIAs, e.g. tabersonine and catharanthine) biosynthesis pathway from 19E-geissoschizine, psychoactive compounds likely to be used in the treatment of opioid dependence. Catalyzes the conversion of dehydrosecodine to catharanthine. This chain is Catharanthine synthase, found in Catharanthus roseus (Madagascar periwinkle).